Here is a 360-residue protein sequence, read N- to C-terminus: Peptide chain release factor 1 (360 aa).

Gln235 is modified (N5-methylglutamine).

The protein belongs to the prokaryotic/mitochondrial release factor family. Post-translationally, methylated by PrmC. Methylation increases the termination efficiency of RF1.

The protein resides in the cytoplasm. Functionally, peptide chain release factor 1 directs the termination of translation in response to the peptide chain termination codons UAG and UAA. The sequence is that of Peptide chain release factor 1 from Burkholderia thailandensis (strain ATCC 700388 / DSM 13276 / CCUG 48851 / CIP 106301 / E264).